The chain runs to 169 residues: Large ribosomal subunit protein uL15 (169 aa).

The disordered stretch occupies residues 20-56 (GRGIGSGKGKTGGRGVKGQKARSGVSIKGFEGGQMPL). Residues 21–35 (RGIGSGKGKTGGRGV) show a composition bias toward gly residues.

Belongs to the universal ribosomal protein uL15 family. As to quaternary structure, part of the 50S ribosomal subunit.

Its function is as follows. Binds to the 23S rRNA. This chain is Large ribosomal subunit protein uL15, found in Methylorubrum extorquens (strain CM4 / NCIMB 13688) (Methylobacterium extorquens).